Reading from the N-terminus, the 1398-residue chain is Disease resistance protein RPV1 (1398 aa).

A TIR domain is found at 22–185 (TTYDVFLSFR…EITNSIFRQL (164 aa)). NAD(+) contacts are provided by residues 31 to 36 (RGEDTR) and G63. E97 is an active-site residue. An NB-ARC domain is found at 201–440 (SHVKEMILRL…KRSYDGLDRI (240 aa)). LRR repeat units follow at residues 203-225 (VKEMILRLHLESSDVRMVGIYGV), 423-447 (KADIHKVLKRSYDGLDRIDKNIFLD), 478-504 (LNDLCLITLPYNQICMHDLIQQMGWEI), 535-560 (IKSVETMSLDLSKLKRVCSNSNVFAK), 610-632 (SYELRYLRWDGYPLDSLPLNFDG), 633-657 (GKLVELHLKCSNIKQLWQGHKDLER), 678-702 (MPNLERLCLSGCVSLIDIHPSVGNM), 703-726 (KKLTTLSLRSCNKLKNLPDSIGDL), 728-750 (SLESLYLSNCSKFEKFPEKGGNM), 751-773 (KSLTELDLKNTAIKDLPDSIGDL), 775-797 (SLESLYLSNCSKFEKFPEKGGNM), 798-820 (KSLTELDLKNTAIKDLPDSIGDL), 822-844 (SLEILNLSDCAKFEKFPEKGGNM), 845-867 (KSLKELDLQNTAIKDLPDSIGDL), 869-891 (SLKYLSLSDCSKFEKFPEKGGNM), 892-914 (KRLLQLILSNTAIKDLPDSIGDL), 916-938 (SLKYLYLSDCSKFEKFPEKGGNM), 939-961 (KSLTELDLKNTAIKDLPDSIGDL), 963-985 (SLEILNLSDCAKFEKFPEKGGNM), 986-1008 (KSLKELDLQNTAIKDLPDSIGDL), 1010-1032 (SLKYLYLSDCSKFEKFPEKGGNM), 1033-1055 (KSLLQLILSNTAIKDLPDSIGDL), 1079-1102 (MKSLRELGLRNTAIKDLPDSIGDL), and 1105-1128 (LEMLSLSNCPKFEVLPLSLKAIDA). The segment covering 1315–1328 (QNSGDNGSALQDAN) has biased composition (polar residues). The segment at 1315 to 1336 (QNSGDNGSALQDANGNVHGANQ) is disordered. An LRR 25 repeat occupies 1346–1369 (LDLLRNLSLGDNGSVVLEDTLGNR). The Nuclear localization signal signature appears at 1369-1373 (RKRRR).

Belongs to the disease resistance TIR-NB-LRR family. As to quaternary structure, homodimer; homodimerization is required for NAD(+) hydrolase (NADase) activity.

The protein localises to the nucleus. The protein resides in the cytoplasm. It carries out the reaction NAD(+) + H2O = ADP-D-ribose + nicotinamide + H(+). Its function is as follows. Disease resistance (R) protein that confers resistance to multiple powdery and downy mildew by promoting cell death. Acts as a NAD(+) hydrolase (NADase): in response to activation, catalyzes cleavage of NAD(+) into ADP-D-ribose (ADPR) and nicotinamide; NAD(+) cleavage triggering a defense system that promotes cell death. This chain is Disease resistance protein RPV1, found in Vitis rotundifolia (Muscadine grape).